A 326-amino-acid chain; its full sequence is Eukaryotic translation initiation factor 3 subunit I (326 aa).

WD repeat units lie at residues 8 to 47 (GHER…RLGT), 50 to 89 (GHQG…VIAS), 145 to 184 (MTES…KVVD), 188 to 227 (DHSA…CLKT), and 285 to 326 (GHFG…NIFE).

The protein belongs to the eIF-3 subunit I family. In terms of assembly, component of the eukaryotic translation initiation factor 3 (eIF-3) complex. The eIF-3 complex interacts with pix.

The protein localises to the cytoplasm. Its function is as follows. Component of the eukaryotic translation initiation factor 3 (eIF-3) complex, which is involved in protein synthesis of a specialized repertoire of mRNAs and, together with other initiation factors, stimulates binding of mRNA and methionyl-tRNAi to the 40S ribosome. The eIF-3 complex specifically targets and initiates translation of a subset of mRNAs involved in cell proliferation. The polypeptide is Eukaryotic translation initiation factor 3 subunit I (Drosophila sechellia (Fruit fly)).